The sequence spans 142 residues: Large ribosomal subunit protein uL13 (142 aa).

It belongs to the universal ribosomal protein uL13 family. In terms of assembly, part of the 50S ribosomal subunit.

This protein is one of the early assembly proteins of the 50S ribosomal subunit, although it is not seen to bind rRNA by itself. It is important during the early stages of 50S assembly. This chain is Large ribosomal subunit protein uL13, found in Aliivibrio salmonicida (strain LFI1238) (Vibrio salmonicida (strain LFI1238)).